The chain runs to 838 residues: Protein P (838 aa).

The segment at M1 to Q177 is terminal protein domain (TP). Residues E178–L341 form a spacer region. 2 disordered regions span residues Q215 to I238 and S285 to S311. Residues S285–G294 show a composition bias toward polar residues. A polymerase/reverse transcriptase domain (RT) region spans residues E342–Q685. In terms of domain architecture, Reverse transcriptase spans E352 to I595. Mg(2+) contacts are provided by D424, D546, and D547.

This sequence belongs to the hepadnaviridae P protein family.

It carries out the reaction DNA(n) + a 2'-deoxyribonucleoside 5'-triphosphate = DNA(n+1) + diphosphate. The catalysed reaction is Endonucleolytic cleavage to 5'-phosphomonoester.. Activated by host HSP70 and HSP40 in vitro to be able to bind the epsilon loop of the pgRNA. Because deletion of the RNase H region renders the protein partly chaperone-independent, the chaperones may be needed indirectly to relieve occlusion of the RNA-binding site by this domain. Inhibited by several reverse-transcriptase inhibitors: Lamivudine, Adefovir and Entecavir. In terms of biological role, multifunctional enzyme that converts the viral RNA genome into dsDNA in viral cytoplasmic capsids. This enzyme displays a DNA polymerase activity that can copy either DNA or RNA templates, and a ribonuclease H (RNase H) activity that cleaves the RNA strand of RNA-DNA heteroduplexes in a partially processive 3'- to 5'-endonucleasic mode. Neo-synthesized pregenomic RNA (pgRNA) are encapsidated together with the P protein, and reverse-transcribed inside the nucleocapsid. Initiation of reverse-transcription occurs first by binding the epsilon loop on the pgRNA genome, and is initiated by protein priming, thereby the 5'-end of (-)DNA is covalently linked to P protein. Partial (+)DNA is synthesized from the (-)DNA template and generates the relaxed circular DNA (RC-DNA) genome. After budding and infection, the RC-DNA migrates in the nucleus, and is converted into a plasmid-like covalently closed circular DNA (cccDNA). The activity of P protein does not seem to be necessary for cccDNA generation, and is presumably released from (+)DNA by host nuclear DNA repair machinery. This chain is Protein P, found in Homo sapiens (Human).